Consider the following 160-residue polypeptide: Nucleotide-binding protein CJA_2652 (160 aa).

The protein belongs to the YajQ family.

In terms of biological role, nucleotide-binding protein. In Cellvibrio japonicus (strain Ueda107) (Pseudomonas fluorescens subsp. cellulosa), this protein is Nucleotide-binding protein CJA_2652.